Here is a 137-residue protein sequence, read N- to C-terminus: Fluoride-specific ion channel FluC 1 (137 aa).

4 helical membrane passes run 4-24 (LIYI…YYLG), 37-57 (LATL…TTYI), 67-87 (VITG…TLSV), and 98-118 (WGIA…MSGL). Residues G77 and T80 each coordinate Na(+).

Belongs to the fluoride channel Fluc/FEX (TC 1.A.43) family.

It is found in the cell membrane. The enzyme catalyses fluoride(in) = fluoride(out). Its activity is regulated as follows. Na(+) is not transported, but it plays an essential structural role and its presence is essential for fluoride channel function. Functionally, fluoride-specific ion channel. Important for reducing fluoride concentration in the cell, thus reducing its toxicity. In Bacillus anthracis, this protein is Fluoride-specific ion channel FluC 1.